The primary structure comprises 579 residues: Probable cholinesterase (579 aa).

Positions 1-19 (MTDHKIIMLLLLGIYCIQA) are cleaved as a signal peptide. N-linked (GlcNAc...) asparagine; by host glycans are attached at residues Asn-77 and Asn-144. The active-site Acyl-ester intermediate is the Ser-217. Residues Asn-257, Asn-269, and Asn-283 are each glycosylated (N-linked (GlcNAc...) asparagine; by host). Catalysis depends on Glu-337, which acts as the Charge relay system. 2 N-linked (GlcNAc...) asparagine; by host glycosylation sites follow: Asn-373 and Asn-394. His-451 (charge relay system) is an active-site residue. Asn-469 carries N-linked (GlcNAc...) asparagine; by host glycosylation.

This sequence belongs to the type-B carboxylesterase/lipase family.

It carries out the reaction an acylcholine + H2O = a carboxylate + choline + H(+). Its function is as follows. May be involved in the disruption of the host membrane. The sequence is that of Probable cholinesterase from Acanthamoeba polyphaga mimivirus (APMV).